The chain runs to 278 residues: MVRVIAVSNPRLAQAFVDYMTTQGIELRVHNTGEAAEIWLADDSHLEQVQHELQQFLIDPLNSRYRAASWQAGNTDADLHYQGFSYLQTLRSKAGPLTLGVMALCIVVYILMQILGDDTLMYWLSWPQDSSQYLQLWRWVSHAFLHFSLLHITFNLLWWWYLGGPLEKRLGSGKLFVLAVVSAFFSGWAQSLFSGALFGGLSGVVYALMGYCWLSGERAPERGLMLPRGLMVFSVLWLVAGYFDILGMSIANAAHVAGLVLGLLMAFWDTRHRAHNEQ.

Transmembrane regions (helical) follow at residues 95-115 (GPLT…MQIL), 143-163 (AFLH…WYLG), 170-190 (LGSG…GWAQ), 192-212 (LFSG…MGYC), 224-241 (LMLP…LVAG), and 245-267 (ILGM…LMAF). Catalysis depends on serine 202, which acts as the Nucleophile. Residue histidine 255 is part of the active site.

This sequence belongs to the peptidase S54 family.

The protein localises to the cell inner membrane. It carries out the reaction Cleaves type-1 transmembrane domains using a catalytic dyad composed of serine and histidine that are contributed by different transmembrane domains.. Functionally, rhomboid-type serine protease that catalyzes intramembrane proteolysis. This is Rhomboid protease GlpG from Serratia proteamaculans (strain 568).